Consider the following 206-residue polypeptide: Ribosomal RNA large subunit methyltransferase E (206 aa).

S-adenosyl-L-methionine-binding residues include Gly-60, Trp-62, Asp-80, Asp-96, and Asp-121. Lys-161 serves as the catalytic Proton acceptor.

This sequence belongs to the class I-like SAM-binding methyltransferase superfamily. RNA methyltransferase RlmE family.

It localises to the cytoplasm. The catalysed reaction is uridine(2552) in 23S rRNA + S-adenosyl-L-methionine = 2'-O-methyluridine(2552) in 23S rRNA + S-adenosyl-L-homocysteine + H(+). Specifically methylates the uridine in position 2552 of 23S rRNA at the 2'-O position of the ribose in the fully assembled 50S ribosomal subunit. The sequence is that of Ribosomal RNA large subunit methyltransferase E from Francisella tularensis subsp. tularensis (strain FSC 198).